The sequence spans 918 residues: Leucine--tRNA ligase (918 aa).

Positions 40–51 match the 'HIGH' region motif; sequence PYPSGVGLHVGH. The 'KMSKS' region motif lies at 692 to 696; sequence KMSKS. K695 contacts ATP.

This sequence belongs to the class-I aminoacyl-tRNA synthetase family.

It localises to the cytoplasm. The enzyme catalyses tRNA(Leu) + L-leucine + ATP = L-leucyl-tRNA(Leu) + AMP + diphosphate. The polypeptide is Leucine--tRNA ligase (Azobacteroides pseudotrichonymphae genomovar. CFP2).